The chain runs to 265 residues: HUWE1-associated protein modifying stress responses (265 aa).

Disordered regions lie at residues 1–22 (MEDK…HWFS), 145–170 (RNSR…GSSV), 195–218 (VRSS…RRNG), and 240–265 (GTRK…NRMI). Polar residues-rich tracts occupy residues 156–170 (VSPN…GSSV) and 195–212 (VRSS…SSNT).

Belongs to the HAPSTR1 family. In terms of assembly, oligomer.

It localises to the nucleus. It is found in the cytoplasm. Its function is as follows. Acts as a central player within a network of stress response pathways promoting cellular adaptability. Functions as a negative regulator of TP53/P53 in the cellular response to telomere erosion and probably also DNA damage. The polypeptide is HUWE1-associated protein modifying stress responses (Xenopus tropicalis (Western clawed frog)).